Here is a 269-residue protein sequence, read N- to C-terminus: Iron(3+)-hydroxamate import ATP-binding protein FhuC (269 aa).

The 237-residue stretch at 4 to 240 (LSTEQLGIGY…DILKQVFQID (237 aa)) folds into the ABC transporter domain. ATP is bound by residues 36–43 (GPNGCGKS) and 160–171 (LLLLDEPTTYLD).

It belongs to the ABC transporter superfamily. Iron (Fe3+)-hydroxamate importer (TC 3.A.1.14.7) family. In terms of assembly, the complex is composed of an ATP-binding protein (FhuC), two transmembrane proteins (FhuB and FhuG) and a solute-binding protein (FhuD or YxeB).

It localises to the cell membrane. It carries out the reaction ATP + H2O + Fe(3+)-hydroxamate complex-[hydroxamate-binding protein]Side 1 = ADP + phosphate + Fe(3+)-hydroxamate complexSide 2 + [hydroxamate-binding protein]Side 1.. Part of the ABC transporter complex FhuBGCD involved in iron(3+)-hydroxamate import. Responsible for energy coupling to the transport system. The protein is Iron(3+)-hydroxamate import ATP-binding protein FhuC (fhuC) of Bacillus subtilis (strain 168).